A 177-amino-acid polypeptide reads, in one-letter code: Probable inosine/xanthosine triphosphatase (177 aa).

The protein belongs to the YjjX NTPase family. As to quaternary structure, homodimer. Mg(2+) is required as a cofactor. Requires Mn(2+) as cofactor.

It catalyses the reaction XTP + H2O = XDP + phosphate + H(+). It carries out the reaction ITP + H2O = IDP + phosphate + H(+). In terms of biological role, phosphatase that hydrolyzes non-canonical purine nucleotides such as XTP and ITP to their respective diphosphate derivatives. Probably excludes non-canonical purines from DNA/RNA precursor pool, thus preventing their incorporation into DNA/RNA and avoiding chromosomal lesions. The protein is Probable inosine/xanthosine triphosphatase of Halalkalibacterium halodurans (strain ATCC BAA-125 / DSM 18197 / FERM 7344 / JCM 9153 / C-125) (Bacillus halodurans).